The primary structure comprises 365 residues: 3-dehydroquinate synthase (365 aa).

Residues 72–77 (SGEKEK), 130–131 (TT), K142, and K151 contribute to the NAD(+) site. Positions 184, 247, and 264 each coordinate Zn(2+).

It belongs to the sugar phosphate cyclases superfamily. Dehydroquinate synthase family. Co(2+) serves as cofactor. Requires Zn(2+) as cofactor. The cofactor is NAD(+).

Its subcellular location is the cytoplasm. The enzyme catalyses 7-phospho-2-dehydro-3-deoxy-D-arabino-heptonate = 3-dehydroquinate + phosphate. The protein operates within metabolic intermediate biosynthesis; chorismate biosynthesis; chorismate from D-erythrose 4-phosphate and phosphoenolpyruvate: step 2/7. Catalyzes the conversion of 3-deoxy-D-arabino-heptulosonate 7-phosphate (DAHP) to dehydroquinate (DHQ). The chain is 3-dehydroquinate synthase from Bacillus cereus (strain AH187).